A 160-amino-acid chain; its full sequence is Transcriptional repressor NrdR (160 aa).

Residues 1 to 11 (MRCPSCSSLDT) are compositionally biased toward polar residues. The disordered stretch occupies residues 1–20 (MRCPSCSSLDTQVKDSRPTE). The segment at 3–34 (CPSCSSLDTQVKDSRPTEDSSVIRRRRVCLAC) is a zinc-finger region. The 91-residue stretch at 49 to 139 (LTVIKRNGRR…VYRNFREAKD (91 aa)) folds into the ATP-cone domain.

This sequence belongs to the NrdR family. Requires Zn(2+) as cofactor.

Negatively regulates transcription of bacterial ribonucleotide reductase nrd genes and operons by binding to NrdR-boxes. This is Transcriptional repressor NrdR from Rhodopseudomonas palustris (strain BisA53).